The sequence spans 529 residues: Delayed-rectifier potassium channel regulatory subunit KCNS1 (529 aa).

The Cytoplasmic portion of the chain corresponds to 1–217 (MLMLLVRGTH…LTMENPGYSL (217 aa)). Residues 218–239 (PSKLFSCVSIGVVLASIAAMCI) form a helical membrane-spanning segment. Topologically, residues 240–270 (HSLPEYQAREAAAAVATVAAGRSAEDVRDDP) are extracellular. The chain crosses the membrane as a helical span at residues 271–293 (VLRRLEYFCIAWFSFEVSSRLLL). At 294–304 (APSTRNFFCHP) the chain is on the cytoplasmic side. Residues 305-322 (LNLIDIVSVLPFYLTLLA) traverse the membrane as a helical segment. Over 323–342 (SVALGGNNHGGTSGEELGHL) the chain is Extracellular. A helical; Voltage-sensor transmembrane segment spans residues 343 to 363 (GKVVQVFRLMRIFRVLKLARH). Residues 364–378 (STGLRSLGATLKHSY) are Cytoplasmic-facing. A helical transmembrane segment spans residues 379 to 400 (REVGILLLYLAVGVSVFSGVAY). Residues 401–413 (TAEKEEDVGFDTI) lie on the Extracellular side of the membrane. The segment at residues 414-425 (PACWWWGTVSMT) is an intramembrane region (helical). The Selectivity filter signature appears at 426-431 (TVGYGD). An intramembrane segment occupies 426–433 (TVGYGDVV). Over 434-440 (PVTLAGK) the chain is Extracellular. The chain crosses the membrane as a helical span at residues 441-469 (LAASGCILGGILVVALPITIIFNKFSHFY). Residues 470-529 (QRQKALEAAVRNSGHREFEDLLSSVDGVSDASLETSRETSQEGRSADLEAPSESPKPQIY) are Cytoplasmic-facing. Positions 498–529 (SDASLETSRETSQEGRSADLEAPSESPKPQIY) are disordered. Basic and acidic residues predominate over residues 504–516 (TSRETSQEGRSAD).

The protein belongs to the potassium channel family. S (TC 1.A.1.2) subfamily. Kv9.1/KCNS1 sub-subfamily. As to quaternary structure, heterotetramer with KCNB1. Heterotetramer with KCNB2. Does not form homomultimers.

It is found in the cell membrane. Potassium channel regulatory subunit that modulate the delayed rectifier voltage-gated potassium channel activity of KCNB1 and KCNB2 by altering their kinetics, expression levels, and shifting the half-inactivation potential to more polarized values. While it does not form functional channels on its own, it can form functional heterotetrameric channels with KCNB1 and KCNB2. Each regulatory subunit has unique regulatory properties that can lead to extensive inhibition, significant changes in kinetics, and/or substantial shifts in the voltage dependencies of the inactivation process. This is Delayed-rectifier potassium channel regulatory subunit KCNS1 from Lemur catta (Ring-tailed lemur).